The chain runs to 173 residues: Bifunctional protein PyrR (173 aa).

A PRPP-binding motif is present at residues 93-105; that stretch reads VILIDDVLYTGRT.

Belongs to the purine/pyrimidine phosphoribosyltransferase family. PyrR subfamily. In terms of assembly, homodimer and homohexamer; in equilibrium.

The catalysed reaction is UMP + diphosphate = 5-phospho-alpha-D-ribose 1-diphosphate + uracil. Its function is as follows. Regulates transcriptional attenuation of the pyrimidine nucleotide (pyr) operon by binding in a uridine-dependent manner to specific sites on pyr mRNA. This disrupts an antiterminator hairpin in the RNA and favors formation of a downstream transcription terminator, leading to a reduced expression of downstream genes. In terms of biological role, also displays a weak uracil phosphoribosyltransferase activity which is not physiologically significant. The polypeptide is Bifunctional protein PyrR (Streptococcus pyogenes serotype M49 (strain NZ131)).